Consider the following 308-residue polypeptide: Methionyl-tRNA formyltransferase (308 aa).

109–112 is a (6S)-5,6,7,8-tetrahydrofolate binding site; sequence SLLP.

This sequence belongs to the Fmt family.

It catalyses the reaction L-methionyl-tRNA(fMet) + (6R)-10-formyltetrahydrofolate = N-formyl-L-methionyl-tRNA(fMet) + (6S)-5,6,7,8-tetrahydrofolate + H(+). Attaches a formyl group to the free amino group of methionyl-tRNA(fMet). The formyl group appears to play a dual role in the initiator identity of N-formylmethionyl-tRNA by promoting its recognition by IF2 and preventing the misappropriation of this tRNA by the elongation apparatus. In Rhizorhabdus wittichii (strain DSM 6014 / CCUG 31198 / JCM 15750 / NBRC 105917 / EY 4224 / RW1) (Sphingomonas wittichii), this protein is Methionyl-tRNA formyltransferase.